Here is a 75-residue protein sequence, read N- to C-terminus: UPF0270 protein PST_1436 (75 aa).

Belongs to the UPF0270 family.

The sequence is that of UPF0270 protein PST_1436 from Stutzerimonas stutzeri (strain A1501) (Pseudomonas stutzeri).